We begin with the raw amino-acid sequence, 473 residues long: PTS system trehalose-specific EIIBC component (473 aa).

Residues 1 to 89 (MMSKINQTDI…IASTGQAQVD (89 aa)) enclose the PTS EIIB type-1 domain. Over 1–110 (MMSKINQTDI…MKWHEQLISH (110 aa)) the chain is Cytoplasmic. Catalysis depends on Cys-29, which acts as the Phosphocysteine intermediate; for EIIB activity. Cys-29 is modified (phosphocysteine; by EIIA). The 365-residue stretch at 109–473 (SHFAVIFFPL…KYRLGTLDIV (365 aa)) folds into the PTS EIIC type-1 domain. The helical transmembrane segment at 111–131 (FAVIFFPLLPALISGGLILGF) threads the bilayer. Topologically, residues 132–158 (RNVIGDLPMSNGQTLAQMYPSLQTIYD) are periplasmic. Residues 159–179 (FLWLIGEAIFFYLPVGICWSA) form a helical membrane-spanning segment. Over 180–187 (VKKMGGTP) the chain is Cytoplasmic. The chain crosses the membrane as a helical span at residues 188–208 (ILGIVLGVTLVSPQLMNAYLL). Residues 209–225 (GQQLPEVWDFGMFSIAK) are Periplasmic-facing. A helical membrane pass occupies residues 226 to 246 (VGYQAQVIPALLAGLALGVIE). Over 247-258 (TRLKRIVPDYLY) the chain is Cytoplasmic. The helical transmembrane segment at 259–279 (LVVVPVCSLILAVFLAHALIG) threads the bilayer. Residues 280 to 300 (PFGRMIGDGVAFAVRHLMTGS) are Periplasmic-facing. Residues 301-321 (FAPIGAALFGFLYAPLVITGV) traverse the membrane as a helical segment. The Cytoplasmic segment spans residues 322 to 340 (HQTTLAIDLQMIQSMGGTP). The chain crosses the membrane as a helical span at residues 341-361 (VWPLIALSNIAQGSAVIGIII). Residues 362 to 370 (SSRKHNERE) lie on the Periplasmic side of the membrane. A helical transmembrane segment spans residues 371–391 (ISVPAAISAWLGVTEPAMYGI). Residues 392-398 (NLKYRFP) are Cytoplasmic-facing. A helical membrane pass occupies residues 399 to 419 (MLCAMIGSGLAGLLCGLNGVM). Over 420–440 (ANGIGVGGLPGILSIQPSYWQ) the chain is Periplasmic. Residues 441-461 (VFALAMAIAIIIPIVLTSFIY) form a helical membrane-spanning segment. The Cytoplasmic portion of the chain corresponds to 462–473 (QRKYRLGTLDIV).

It is found in the cell inner membrane. The enzyme catalyses alpha,alpha-trehalose(out) + N(pros)-phospho-L-histidyl-[protein] = alpha,alpha-trehalose 6-phosphate(in) + L-histidyl-[protein]. In terms of biological role, the phosphoenolpyruvate-dependent sugar phosphotransferase system (sugar PTS), a major carbohydrate active transport system, catalyzes the phosphorylation of incoming sugar substrates concomitantly with their translocation across the cell membrane. This system is involved in trehalose transport at low osmolarity. In Escherichia coli (strain K12), this protein is PTS system trehalose-specific EIIBC component (treB).